A 152-amino-acid chain; its full sequence is Anaerobic nitrite reductase SYMA (152 aa).

Residues 2–151 (ALTERQEALL…LVATIKAEMK (150 aa)) form the Globin domain. The Homodimerization signature appears at 35–39 (EAAPE). The heme b site is built by Ser-45, Lys-59, His-63, Arg-93, and His-98. The Homodimerization signature appears at 105–117 (DPHFEVMKGALLG).

Belongs to the plant globin family. As to quaternary structure, homodimer. Heme b is required as a cofactor. As to expression, root nodules.

It localises to the cytoplasm. Its subcellular location is the nucleus. It catalyses the reaction Fe(III)-heme b-[protein] + nitric oxide + H2O = Fe(II)-heme b-[protein] + nitrite + 2 H(+). Phytoglobin that reduces nitrite to nitric oxide (NO) under anoxic conditions (e.g. during flooding or in waterlogged soil) and upon root nodulation. Required for general plant development and during nodulation, especially for the onset of symbiosis. Monitors nitric oxide (NO) levels during early phase of the nitrogen-fixing symbiosis and buffers oxygen in functioning nodules. May not function as an oxygen storage or transport protein. Has an unusually high affinity for O(2) through a hexacoordinate heme iron because of a very low dissociation constant. The chain is Anaerobic nitrite reductase SYMA from Casuarina glauca (Swamp oak).